A 164-amino-acid chain; its full sequence is 2-C-methyl-D-erythritol 2,4-cyclodiphosphate synthase (164 aa).

Positions 9 and 11 each coordinate a divalent metal cation. 4-CDP-2-C-methyl-D-erythritol 2-phosphate is bound by residues Asp-9–His-11 and His-36–Ser-37. An a divalent metal cation-binding site is contributed by His-44. Residues Asp-58–Gly-60, Phe-63–Asp-67, Thr-134–Glu-137, Phe-141, and Arg-144 contribute to the 4-CDP-2-C-methyl-D-erythritol 2-phosphate site.

This sequence belongs to the IspF family. In terms of assembly, homotrimer. Requires a divalent metal cation as cofactor.

The enzyme catalyses 4-CDP-2-C-methyl-D-erythritol 2-phosphate = 2-C-methyl-D-erythritol 2,4-cyclic diphosphate + CMP. The protein operates within isoprenoid biosynthesis; isopentenyl diphosphate biosynthesis via DXP pathway; isopentenyl diphosphate from 1-deoxy-D-xylulose 5-phosphate: step 4/6. Its function is as follows. Involved in the biosynthesis of isopentenyl diphosphate (IPP) and dimethylallyl diphosphate (DMAPP), two major building blocks of isoprenoid compounds. Catalyzes the conversion of 4-diphosphocytidyl-2-C-methyl-D-erythritol 2-phosphate (CDP-ME2P) to 2-C-methyl-D-erythritol 2,4-cyclodiphosphate (ME-CPP) with a corresponding release of cytidine 5-monophosphate (CMP). The chain is 2-C-methyl-D-erythritol 2,4-cyclodiphosphate synthase from Alkalilimnicola ehrlichii (strain ATCC BAA-1101 / DSM 17681 / MLHE-1).